An 81-amino-acid chain; its full sequence is ATP synthase subunit c, chloroplastic (81 aa).

A run of 2 helical transmembrane segments spans residues 3-23 (PLIS…ASIG) and 57-77 (LAFM…LLFA).

This sequence belongs to the ATPase C chain family. F-type ATPases have 2 components, F(1) - the catalytic core - and F(0) - the membrane proton channel. F(1) has five subunits: alpha(3), beta(3), gamma(1), delta(1), epsilon(1). F(0) has four main subunits: a(1), b(1), b'(1) and c(10-14). The alpha and beta chains form an alternating ring which encloses part of the gamma chain. F(1) is attached to F(0) by a central stalk formed by the gamma and epsilon chains, while a peripheral stalk is formed by the delta, b and b' chains.

It is found in the plastid. Its subcellular location is the chloroplast thylakoid membrane. Functionally, f(1)F(0) ATP synthase produces ATP from ADP in the presence of a proton or sodium gradient. F-type ATPases consist of two structural domains, F(1) containing the extramembraneous catalytic core and F(0) containing the membrane proton channel, linked together by a central stalk and a peripheral stalk. During catalysis, ATP synthesis in the catalytic domain of F(1) is coupled via a rotary mechanism of the central stalk subunits to proton translocation. In terms of biological role, key component of the F(0) channel; it plays a direct role in translocation across the membrane. A homomeric c-ring of between 10-14 subunits forms the central stalk rotor element with the F(1) delta and epsilon subunits. The sequence is that of ATP synthase subunit c, chloroplastic from Gossypium barbadense (Sea Island cotton).